We begin with the raw amino-acid sequence, 40 residues long: Omega-conotoxin RsXXVIA (40 aa).

Contains 4 disulfide bonds. As to expression, expressed by the venom duct.

The protein resides in the secreted. In terms of biological role, omega-conotoxins act at presynaptic membranes, they bind and block voltage-gated calcium channels (Cav). This toxin inhibits rat Cav2.2/CACNA1B calcium channels in a dose-dependent manner (EC(50)=2.8 uM), whose effect is partially reversed after washing. In vivo, when injected into mice, it shows both an analgesic effect in acute thermal pain at 30 and 45 minutes post-injection and an anti-nociceptive effect in a formalin chronic pain test. The protein is Omega-conotoxin RsXXVIA of Conus regularis (Regular cone).